Reading from the N-terminus, the 315-residue chain is Neuroguidin (315 aa).

The residue at position 2 (alanine 2) is an N-acetylalanine. Residues 13 to 41 adopt a coiled-coil conformation; sequence SAVTLLKNLQEQVMAVTAQVKSLTQKVQA. The tract at residues 41 to 174 is necessary for interaction with EIF4E; the sequence is AGAYPTEKGL…KGVSKKYVPP (134 aa). A phosphoserine mark is found at serine 121, serine 142, and serine 143. Residues 124 to 169 are disordered; sequence ENDPLRFKPHPSNMMSKLSSEDEEEDEAEDDQSEASGKKSVKGVSK. Acidic residues predominate over residues 144-156; sequence EDEEEDEAEDDQS. Positions 181-205 form a coiled coil; the sequence is YDETEAEREKKRLERAKRRALSSSV. Residues serine 204 and serine 214 each carry the phosphoserine modification. The disordered stretch occupies residues 277–315; that stretch reads DISALTGGTVHLDEDQNPIKKRKKIPQKGRKKKGFRRRR. Residues 295-315 are compositionally biased toward basic residues; that stretch reads IKKRKKIPQKGRKKKGFRRRR.

The protein belongs to the SAS10 family. As to quaternary structure, part of the small subunit (SSU) processome, composed of more than 70 proteins and the RNA chaperone small nucleolar RNA (snoRNA) U3. Interacts with CPEB1 and EIF4E.

Its subcellular location is the nucleus. The protein resides in the nucleolus. The protein localises to the chromosome. It is found in the centromere. It localises to the cytoplasm. Its subcellular location is the cell projection. The protein resides in the axon. The protein localises to the dendrite. It is found in the filopodium. Functionally, part of the small subunit (SSU) processome, first precursor of the small eukaryotic ribosomal subunit. During the assembly of the SSU processome in the nucleolus, many ribosome biogenesis factors, an RNA chaperone and ribosomal proteins associate with the nascent pre-rRNA and work in concert to generate RNA folding, modifications, rearrangements and cleavage as well as targeted degradation of pre-ribosomal RNA by the RNA exosome. Its dissociation from the complex determines the transition from state pre-A1 to state pre-A1*. Inhibits mRNA translation in a cytoplasmic polyadenylation element (CPE)-dependent manner. In Homo sapiens (Human), this protein is Neuroguidin.